A 152-amino-acid polypeptide reads, in one-letter code: 1,4-dihydroxy-2-naphthoyl-CoA hydrolase (152 aa).

Aspartate 20 is an active-site residue.

It belongs to the 4-hydroxybenzoyl-CoA thioesterase family. DHNA-CoA hydrolase subfamily.

The enzyme catalyses 1,4-dihydroxy-2-naphthoyl-CoA + H2O = 1,4-dihydroxy-2-naphthoate + CoA + H(+). It participates in cofactor biosynthesis; phylloquinone biosynthesis. It functions in the pathway quinol/quinone metabolism; 1,4-dihydroxy-2-naphthoate biosynthesis; 1,4-dihydroxy-2-naphthoate from chorismate: step 7/7. Catalyzes the hydrolysis of 1,4-dihydroxy-2-naphthoyl-CoA (DHNA-CoA) to 1,4-dihydroxy-2-naphthoate (DHNA), a reaction involved in phylloquinone (vitamin K1) biosynthesis. The protein is 1,4-dihydroxy-2-naphthoyl-CoA hydrolase of Parasynechococcus marenigrum (strain WH8102).